Reading from the N-terminus, the 295-residue chain is Large ribosomal subunit protein uL29m (295 aa).

Belongs to the universal ribosomal protein uL29 family. In terms of assembly, component of the mitochondrial large ribosomal subunit. Mature mitochondrial ribosomes consist of a small (37S) and a large (54S) subunit. The 37S subunit contains at least 33 different proteins and 1 molecule of RNA (15S). The 54S subunit contains at least 45 different proteins and 1 molecule of RNA (21S).

The protein localises to the mitochondrion. This Meyerozyma guilliermondii (strain ATCC 6260 / CBS 566 / DSM 6381 / JCM 1539 / NBRC 10279 / NRRL Y-324) (Yeast) protein is Large ribosomal subunit protein uL29m (MRPL4).